Here is a 203-residue protein sequence, read N- to C-terminus: Pyrrolidone-carboxylate peptidase (203 aa).

Residues Glu78, Cys141, and His165 contribute to the active site.

The protein belongs to the peptidase C15 family. In terms of assembly, homotetramer.

It is found in the cytoplasm. The catalysed reaction is Release of an N-terminal pyroglutamyl group from a polypeptide, the second amino acid generally not being Pro.. Functionally, removes 5-oxoproline from various penultimate amino acid residues except L-proline. The protein is Pyrrolidone-carboxylate peptidase of Thermoanaerobacter pseudethanolicus (strain ATCC 33223 / 39E) (Clostridium thermohydrosulfuricum).